A 233-amino-acid chain; its full sequence is Probable transglycosylase IsaA (233 aa).

Positions 1–29 are cleaved as a signal peptide; it reads MKKTIMASSLAVALGVTGYAAGTGHQAHA.

This sequence belongs to the transglycosylase family. IsaA subfamily.

Its subcellular location is the secreted. Is able to cleave peptidoglycan. This chain is Probable transglycosylase IsaA (isaA), found in Staphylococcus aureus (strain USA300).